A 75-amino-acid chain; its full sequence is RNA-binding protein KhpA (75 aa).

Residues 29–75 (SIILELKVAPEDMGKVIGKQGRIAKAIRTVIKAAAVKENKRVVVEII) enclose the KH domain.

This sequence belongs to the KhpA RNA-binding protein family. In terms of assembly, forms a complex with KhpB.

It is found in the cytoplasm. Functionally, a probable RNA chaperone. Forms a complex with KhpB which binds to cellular RNA and controls its expression. Plays a role in peptidoglycan (PG) homeostasis and cell length regulation. The chain is RNA-binding protein KhpA from Clostridium acetobutylicum (strain ATCC 824 / DSM 792 / JCM 1419 / IAM 19013 / LMG 5710 / NBRC 13948 / NRRL B-527 / VKM B-1787 / 2291 / W).